Consider the following 183-residue polypeptide: DELTA-miturgitoxin-Cp1a (183 aa).

A signal peptide spans 1-20; that stretch reads MKFSLFFSVFFLAVLHACLS. Residues 21–47 constitute a propeptide that is removed on maturation; it reads ESEIDLEDEEHFMSSDSFLSEIQDESR. The Processing quadruplet motif signature appears at 44 to 47; the sequence is DESR. Cystine bridges form between Cys51-Cys66, Cys58-Cys75, Cys65-Cys88, Cys77-Cys86, Cys115-Cys130, Cys122-Cys139, Cys129-Cys157, and Cys141-Cys155. 2 Domain repeats span residues 51 to 77 and 115 to 141; these read CIER…KCTC and CVPK…QCKC. The segment at 51 to 141 is 2 X approximate repeats with cysteine pattern C-C-CC-C-C; sequence CIERNKECTN…GGIFKYQCKC (91 aa). Residues 164–177 form a predicted alpha-helix region; it reads QAIEGALRIAKKLI. At Trp181 the chain carries Tryptophan amide.

This sequence belongs to the neurotoxin 19 (CSTX) family. Double-CSTX subfamily. Post-translationally, cleavage of the propeptide depends on the processing quadruplet motif (XXXR, with at least one of X being E). As to expression, expressed by the venom gland.

It is found in the secreted. The protein resides in the target cell membrane. In terms of biological role, spider venom toxin that exhibits cytolytic activity by forming an alpha-helix across the membrane. Lethal to insect larvae. Causes instant paralysis and death in the larvae of the flesh fly (S.carnaria) at doses of 20 ug/g, at doses of less than 10 ug/g causes reversible paralysis. Has cytolytic activity against insect Sf9 cells. Causes stable and irreversible depolarization of fly muscle fibers, leading to contracture at higher toxin concentrations. Destabilizes membranes. This is DELTA-miturgitoxin-Cp1a from Cheiracanthium punctorium (Yellow sac spider).